An 804-amino-acid chain; its full sequence is RasGAP-activating-like protein 1 (804 aa).

C2 domains lie at 1–105 (MAKS…DSWI) and 116–231 (VQGE…KGWF). Residues Asp21, Asp27, Asp74, Asp76, Asp82, Asp149, Asp155, Asp202, Asp204, and Asp210 each coordinate Ca(2+). The Ras-GAP domain maps to 317 to 545 (GLAGRFLDYL…SRVRDFLDRL (229 aa)). One can recognise a PH domain in the interval 565 to 672 (AIVREGYLLK…WLSALRKASA (108 aa)). The Btk-type zinc-finger motif lies at 674-710 (NPNKLAACHPGAFRSARWTCCLQAERSAAGCSRTHSA). Zn(2+) is bound by residues His682, Cys693, Cys694, and Cys704.

Requires Ca(2+) as cofactor. Highly expressed in thyroid and adrenal medulla, lower expression in brain, spinal cord and trachea. Expressed in melanocytes.

Functionally, probable inhibitory regulator of the Ras-cyclic AMP pathway. Plays a role in dendrite formation by melanocytes. The chain is RasGAP-activating-like protein 1 from Homo sapiens (Human).